Consider the following 61-residue polypeptide: Small ribosomal subunit protein uS14B (61 aa).

Positions 24, 27, 40, and 43 each coordinate Zn(2+).

It belongs to the universal ribosomal protein uS14 family. Zinc-binding uS14 subfamily. In terms of assembly, part of the 30S ribosomal subunit. Contacts proteins S3 and S10. The cofactor is Zn(2+).

In terms of biological role, binds 16S rRNA, required for the assembly of 30S particles and may also be responsible for determining the conformation of the 16S rRNA at the A site. The protein is Small ribosomal subunit protein uS14B of Mycolicibacterium gilvum (strain PYR-GCK) (Mycobacterium gilvum (strain PYR-GCK)).